Consider the following 318-residue polypeptide: Ferredoxin--NADP reductase (318 aa).

The FAD site is built by Asp-33, Gln-41, Tyr-46, Val-84, Phe-115, Asp-276, and Thr-316.

Belongs to the ferredoxin--NADP reductase type 2 family. In terms of assembly, homodimer. It depends on FAD as a cofactor.

The enzyme catalyses 2 reduced [2Fe-2S]-[ferredoxin] + NADP(+) + H(+) = 2 oxidized [2Fe-2S]-[ferredoxin] + NADPH. The sequence is that of Ferredoxin--NADP reductase from Lactobacillus gasseri (strain ATCC 33323 / DSM 20243 / BCRC 14619 / CIP 102991 / JCM 1131 / KCTC 3163 / NCIMB 11718 / NCTC 13722 / AM63).